We begin with the raw amino-acid sequence, 76 residues long: Envelope small membrane protein (76 aa).

The Virion surface segment spans residues 1–16 (MYSFVSEETGTLIVNS). A helical membrane pass occupies residues 17–37 (VLLFLAFVVFLLVTLAILTAL). Residues 38–76 (RLCAYCCNIVNVSLVKPTVYVYSRVKNLNSSEGVPDLLV) are Intravirion-facing.

Belongs to the betacoronaviruses E protein family. As to quaternary structure, homopentamer. Interacts with membrane protein M in the budding compartment of the host cell, which is located between endoplasmic reticulum and the Golgi complex. Interacts with Nucleoprotein.

The protein localises to the host Golgi apparatus membrane. Its function is as follows. Plays a central role in virus morphogenesis and assembly. Acts as a viroporin and self-assembles in host membranes forming pentameric protein-lipid pores that allow ion transport. Also plays a role in the induction of apoptosis. The chain is Envelope small membrane protein from Rhinolophus sinicus (Chinese rufous horseshoe bat).